The primary structure comprises 85 residues: Large ribosomal subunit protein bL27 (85 aa).

The tract at residues Met-1–Arg-20 is disordered.

Belongs to the bacterial ribosomal protein bL27 family.

This is Large ribosomal subunit protein bL27 from Haemophilus influenzae (strain ATCC 51907 / DSM 11121 / KW20 / Rd).